The following is a 668-amino-acid chain: Spindle assembly abnormal protein 6 homolog (668 aa).

The PISA domain maps to valine 39–leucine 91. Residues leucine 182–leucine 482 adopt a coiled-coil conformation. Residues glycine 623–serine 668 are disordered.

As to quaternary structure, nine homodimers form a cartwheel structure with an internal diameter of 23 nM and radial spokes connecting to the microtubule triplets.

Its subcellular location is the cytoplasm. The protein resides in the cytoskeleton. It is found in the microtubule organizing center. The protein localises to the centrosome. Central scaffolding component of the centrioles ensuring their 9-fold symmetry. Required for centrosome biogenesis and duplication: required both for mother-centriole-dependent centriole duplication and deuterosome-dependent centriole amplification in multiciliated cells. This Xenopus laevis (African clawed frog) protein is Spindle assembly abnormal protein 6 homolog (sas6).